The chain runs to 80 residues: Large ribosomal subunit protein uL24 (80 aa).

This sequence belongs to the universal ribosomal protein uL24 family. As to quaternary structure, part of the 50S ribosomal subunit.

Its function is as follows. One of two assembly initiator proteins, it binds directly to the 5'-end of the 23S rRNA, where it nucleates assembly of the 50S subunit. One of the proteins that surrounds the polypeptide exit tunnel on the outside of the subunit. This is Large ribosomal subunit protein uL24 from Chlorobium phaeovibrioides (strain DSM 265 / 1930) (Prosthecochloris vibrioformis (strain DSM 265)).